The sequence spans 485 residues: MGPVMPPSKKPEGTGISVSSQCYRSSTLSNPLQDDDDLDFPPPPVKIHKEKGGMEDEELTNLNWLHENKNLLKSFGDTVLRSVSPVQDIDDDTPPSPAQSDMPYDAKQNPNCKPPYSFSCLIFMAVEDSPTKRLPVKDIYNWILEHFPYFANAPTGWKNSVRHNLSLNKCFKKVDKDRSQSIGKGSLWCIDPEYRQNLIQALKKTPYHPYSHVFNTPPTSPQAYQSTSVPPLWPGSTFFKKNGALLQDPDIDAASAMMLLNSAHELQAGFSPGVIQNGARVLNRGIFPGVRPLPINPIGAMAASVRNGIANCRTRMESEPSCGSPLVSSDPKDDHNYSSAKSANKRSSSPSDSISSSADDHYEFAAKVCREGSDISFQSHESFSETEEEDKKQIKKELKEPLVESGYSSQHKKKQHLLKLRRIPSDALPLKKRRTEKPPESDDEEMKEAAGSLLHLAGIRSCLNNITNRTAKGQKEQKDKETTKN.

Disordered stretches follow at residues 1–54 (MGPV…KGGM) and 85–108 (PVQD…DAKQ). The segment covering 16-30 (ISVSSQCYRSSTLSN) has biased composition (polar residues). Residues 113–209 (KPPYSFSCLI…QALKKTPYHP (97 aa)) constitute a DNA-binding region (fork-head). 2 disordered regions span residues 316–357 (MESE…ISSS) and 401–449 (PLVE…MKEA). A compositionally biased stretch (low complexity) spans 338 to 357 (SSAKSANKRSSSPSDSISSS). Residues 410-422 (QHKKKQHLLKLRR) show a composition bias toward basic residues.

As to expression, at early cleavage stages, localized within the animal half of the embryo. At gastrulation, expression expands over the whole embryo excluding the future endodermal cells of the blastopore. During neurulation, expressed in the prospective eye field and in the neural crest cells. Strongly enriched in the eye vesicles at stage 26. From stage 29 onwards, expressed predominantly in the eye, the branchial arches and the vagal ganglion. At stage 38, expressed throughout the head with strongest expression in the head mesenchyme and the eye lens.

It is found in the nucleus. Functionally, acts as a transcriptional repressor. May be involved in DNA damage-inducible cell cycle arrests (checkpoints). This Xenopus laevis (African clawed frog) protein is Forkhead box protein N3.